Here is a 196-residue protein sequence, read N- to C-terminus: ATP-dependent Clp protease proteolytic subunit (196 aa).

Catalysis depends on Ser-96, which acts as the Nucleophile. His-121 is an active-site residue.

This sequence belongs to the peptidase S14 family. In terms of assembly, fourteen ClpP subunits assemble into 2 heptameric rings which stack back to back to give a disk-like structure with a central cavity, resembling the structure of eukaryotic proteasomes.

It is found in the cytoplasm. It carries out the reaction Hydrolysis of proteins to small peptides in the presence of ATP and magnesium. alpha-casein is the usual test substrate. In the absence of ATP, only oligopeptides shorter than five residues are hydrolyzed (such as succinyl-Leu-Tyr-|-NHMec, and Leu-Tyr-Leu-|-Tyr-Trp, in which cleavage of the -Tyr-|-Leu- and -Tyr-|-Trp bonds also occurs).. Functionally, cleaves peptides in various proteins in a process that requires ATP hydrolysis. Has a chymotrypsin-like activity. Plays a major role in the degradation of misfolded proteins. This is ATP-dependent Clp protease proteolytic subunit from Streptococcus pneumoniae (strain P1031).